Here is a 169-residue protein sequence, read N- to C-terminus: Allophycocyanin subunit beta-18 (169 aa).

The residue at position 72 (Asn-72) is an N4-methylasparagine. Cys-82 serves as a coordination point for (2R,3E)-phycocyanobilin.

This sequence belongs to the phycobiliprotein family. Heterodimer of an alpha and a beta chain. Contains one covalently linked bilin chromophore.

It is found in the plastid. The protein localises to the chloroplast thylakoid membrane. Its function is as follows. Light-harvesting photosynthetic bile pigment-protein from the phycobiliprotein complex. Allophycocyanin has a maximum absorption at approximately 650 nanometers. The polypeptide is Allophycocyanin subunit beta-18 (apcF) (Porphyra purpurea (Red seaweed)).